A 216-amino-acid chain; its full sequence is GTP cyclohydrolase 1 (216 aa).

3 residues coordinate Zn(2+): C109, H112, and C180.

This sequence belongs to the GTP cyclohydrolase I family. In terms of assembly, homomer.

The catalysed reaction is GTP + H2O = 7,8-dihydroneopterin 3'-triphosphate + formate + H(+). Its pathway is cofactor biosynthesis; 7,8-dihydroneopterin triphosphate biosynthesis; 7,8-dihydroneopterin triphosphate from GTP: step 1/1. This Tolumonas auensis (strain DSM 9187 / NBRC 110442 / TA 4) protein is GTP cyclohydrolase 1.